A 561-amino-acid polypeptide reads, in one-letter code: Carbohydrate sulfotransferase 15 (561 aa).

The Cytoplasmic segment spans residues 1–80 (MRHCINCCVQ…FLRFRKGKRC (80 aa)). Residues 81–101 (SLVFGLIIMTLVMASYILSGA) form a helical; Signal-anchor for type II membrane protein membrane-spanning segment. At 102–561 (HQELLISSPF…DDEAFAWKTT (460 aa)) the chain is on the lumenal side. A 3'-phosphoadenylyl sulfate-binding site is contributed by 263-267 (KCGTT). Residue Asn-364 is glycosylated (N-linked (GlcNAc...) asparagine). 3'-phosphoadenylyl sulfate contacts are provided by Arg-392 and Ser-400.

It belongs to the sulfotransferase 1 family. In terms of assembly, homodimer; disulfide-linked (Potential). The relevance of homodimerization is however unsure. May interact with phosphorylated proteins in resting B-cells, including HCK. A divalent metal cation serves as cofactor. The cofactor is glutathione. In terms of processing, glycosylated.

It localises to the golgi apparatus membrane. It catalyses the reaction dermatan 4'-sulfate + n 3'-phosphoadenylyl sulfate = dermatan 4',6'-bissulfate + n adenosine 3',5'-bisphosphate + n H(+). The enzyme catalyses chondroitin 4'-sulfate + n 3'-phosphoadenylyl sulfate = chondroitin 4',6'-bissulfate + n adenosine 3',5'-bisphosphate + n H(+). Its activity is regulated as follows. Inhibited by phenyl beta-GalNAc(4,6-SO(4)). Its function is as follows. Sulfotransferase that transfers sulfate from 3'-phosphoadenosine 5'-phosphosulfate (PAPS) to the C-6 hydroxyl group of the GalNAc 4-sulfate residue of chondroitin sulfate A and forms chondroitin sulfate E containing GlcA-GalNAc(4,6-SO(4)) repeating units. It also transfers sulfate to a unique non-reducing terminal sequence, GalNAc(4SO4)-GlcA(2SO4)-GalNAc(6SO4), to yield a highly sulfated structure similar to the structure found in thrombomodulin chondroitin sulfate. May also act as a B-cell receptor involved in BCR ligation-mediated early activation that mediate regulatory signals key to B-cell development and/or regulation of B-cell-specific RAG expression; however such results are unclear in vivo. The polypeptide is Carbohydrate sulfotransferase 15 (Chst15) (Mus musculus (Mouse)).